Consider the following 809-residue polypeptide: Quinate/shikimate dehydrogenase (quinone) (809 aa).

5 helical membrane-spanning segments follow: residues V14–G34, G41–F61, V68–F88, F90–T110, and A127–I147.

Belongs to the bacterial PQQ dehydrogenase family. Pyrroloquinoline quinone is required as a cofactor.

It is found in the cell membrane. The catalysed reaction is L-quinate + a quinone = 3-dehydroquinate + a quinol. It catalyses the reaction shikimate + a quinone = 3-dehydroshikimate + a quinol. It participates in aromatic compound metabolism; 3,4-dihydroxybenzoate biosynthesis; 3-dehydroquinate from D-quinate (PQQ route): step 1/1. Its function is as follows. Can act either on quinate or on shikimate. In Acinetobacter baylyi (strain ATCC 33305 / BD413 / ADP1), this protein is Quinate/shikimate dehydrogenase (quinone) (quiA).